The sequence spans 459 residues: Cysteine--tRNA ligase (459 aa).

Cysteine 28 is a Zn(2+) binding site. Positions 30–40 (VTIYDLCHIGH) match the 'HIGH' region motif. Residues cysteine 209, histidine 234, and glutamate 238 each coordinate Zn(2+). Residues 266-270 (KMSKS) carry the 'KMSKS' region motif. Lysine 269 serves as a coordination point for ATP.

This sequence belongs to the class-I aminoacyl-tRNA synthetase family. In terms of assembly, monomer. Requires Zn(2+) as cofactor.

Its subcellular location is the cytoplasm. It catalyses the reaction tRNA(Cys) + L-cysteine + ATP = L-cysteinyl-tRNA(Cys) + AMP + diphosphate. This is Cysteine--tRNA ligase from Shewanella baltica (strain OS195).